An 83-amino-acid polypeptide reads, in one-letter code: Small ribosomal subunit protein bS16 (83 aa).

This sequence belongs to the bacterial ribosomal protein bS16 family.

This Shewanella woodyi (strain ATCC 51908 / MS32) protein is Small ribosomal subunit protein bS16.